The following is a 428-amino-acid chain: Gamma-glutamyl phosphate reductase (428 aa).

This sequence belongs to the gamma-glutamyl phosphate reductase family.

The protein resides in the cytoplasm. The catalysed reaction is L-glutamate 5-semialdehyde + phosphate + NADP(+) = L-glutamyl 5-phosphate + NADPH + H(+). Its pathway is amino-acid biosynthesis; L-proline biosynthesis; L-glutamate 5-semialdehyde from L-glutamate: step 2/2. Catalyzes the NADPH-dependent reduction of L-glutamate 5-phosphate into L-glutamate 5-semialdehyde and phosphate. The product spontaneously undergoes cyclization to form 1-pyrroline-5-carboxylate. The polypeptide is Gamma-glutamyl phosphate reductase (Chromohalobacter salexigens (strain ATCC BAA-138 / DSM 3043 / CIP 106854 / NCIMB 13768 / 1H11)).